The following is a 134-amino-acid chain: Estradiol 17-beta-dehydrogenase 8 (134 aa).

S38 serves as a coordination point for substrate. K42 is modified (N6-succinyllysine). The active-site Proton acceptor is Y51. NAD(+) contacts are provided by residues 51-55 (YAASK) and 84-86 (IAT). N6-succinyllysine is present on K55.

This sequence belongs to the short-chain dehydrogenases/reductases (SDR) family. As to quaternary structure, heterotetramer with CBR4; contains two molecules of HSD17B8 and CBR4.

It localises to the mitochondrion matrix. The catalysed reaction is 17beta-estradiol + NAD(+) = estrone + NADH + H(+). The enzyme catalyses 17beta-estradiol + NADP(+) = estrone + NADPH + H(+). It carries out the reaction testosterone + NAD(+) = androst-4-ene-3,17-dione + NADH + H(+). It functions in the pathway steroid biosynthesis; estrogen biosynthesis. Its pathway is lipid metabolism; fatty acid biosynthesis. Functionally, NAD-dependent 17-beta-hydroxysteroid dehydrogenase with highest activity towards estradiol. Has very low activity towards testosterone. The heterotetramer with CBR4 has NADH-dependent 3-ketoacyl-acyl carrier protein reductase activity, and thereby plays a role in mitochondrial fatty acid biosynthesis. Within the heterotetramer, HSD17B8 binds NADH; CBR4 binds NADPD. The chain is Estradiol 17-beta-dehydrogenase 8 (HSD17B8) from Callithrix jacchus (White-tufted-ear marmoset).